The sequence spans 478 residues: Proline--tRNA ligase (478 aa).

This sequence belongs to the class-II aminoacyl-tRNA synthetase family. ProS type 3 subfamily. As to quaternary structure, homodimer.

The protein resides in the cytoplasm. The enzyme catalyses tRNA(Pro) + L-proline + ATP = L-prolyl-tRNA(Pro) + AMP + diphosphate. Catalyzes the attachment of proline to tRNA(Pro) in a two-step reaction: proline is first activated by ATP to form Pro-AMP and then transferred to the acceptor end of tRNA(Pro). The protein is Proline--tRNA ligase of Clostridium botulinum (strain 657 / Type Ba4).